We begin with the raw amino-acid sequence, 215 residues long: Cytochrome b6 (215 aa).

A helical membrane pass occupies residues 32-52 (IFYCIGGIVFTSFLIQVASGF). Heme c is bound at residue Cys-35. Positions 86 and 100 each coordinate heme b. Helical transmembrane passes span 90 to 110 (ASMM…TGGF), 116 to 136 (LTWV…VTGY), and 186 to 206 (LHTF…FLMI). Heme b-binding residues include His-187 and His-202.

It belongs to the cytochrome b family. PetB subfamily. In terms of assembly, the 4 large subunits of the cytochrome b6-f complex are cytochrome b6, subunit IV (17 kDa polypeptide, PetD), cytochrome f and the Rieske protein, while the 4 small subunits are PetG, PetL, PetM and PetN. The complex functions as a dimer. It depends on heme b as a cofactor. The cofactor is heme c.

It is found in the plastid. It localises to the chloroplast thylakoid membrane. In terms of biological role, component of the cytochrome b6-f complex, which mediates electron transfer between photosystem II (PSII) and photosystem I (PSI), cyclic electron flow around PSI, and state transitions. In Gracilaria tenuistipitata var. liui (Red alga), this protein is Cytochrome b6.